We begin with the raw amino-acid sequence, 347 residues long: UPF0284 protein SSO2213 (347 aa).

Belongs to the UPF0284 family.

The polypeptide is UPF0284 protein SSO2213 (Saccharolobus solfataricus (strain ATCC 35092 / DSM 1617 / JCM 11322 / P2) (Sulfolobus solfataricus)).